A 598-amino-acid polypeptide reads, in one-letter code: uncharacterized protein (598 aa).

An ABC transmembrane type-1 domain is found at 39–322 (LIMVFVFVTV…LSNQFNMIQM (284 aa)). A run of 5 helical transmembrane segments spans residues 40-60 (IMVFVFVTVSSILGVLSPYLI), 80-100 (MLILGTIYALTSLLFWLQGKI), 150-170 (VLGNSIIQFFSGIVTLAGAVI), 177-197 (VILSLVTLSIVPLTVLITQIV), and 273-293 (LGFALISGFGGWLALKDIITV). Residues 355–589 (IEFKNVWFSY…RGFYYELFTS (235 aa)) enclose the ABC transporter domain. ATP is bound at residue 388 to 395 (GPTGSGKT).

The protein belongs to the ABC transporter superfamily.

It is found in the cell membrane. This is an uncharacterized protein from Thermotoga maritima (strain ATCC 43589 / DSM 3109 / JCM 10099 / NBRC 100826 / MSB8).